The chain runs to 1055 residues: DNA-directed RNA polymerase subunit beta' (1055 aa).

The Zn(2+) site is built by Cys-60, Cys-62, Cys-75, and Cys-78. 3 residues coordinate Mg(2+): Asp-449, Asp-451, and Asp-453. Zn(2+) is bound by residues Cys-818, Cys-892, Cys-899, and Cys-902.

The protein belongs to the RNA polymerase beta' chain family. As to quaternary structure, the RNAP catalytic core consists of 2 alpha, 1 beta, 1 beta' and 1 omega subunit. When a sigma factor is associated with the core the holoenzyme is formed, which can initiate transcription. Mg(2+) serves as cofactor. The cofactor is Zn(2+).

The catalysed reaction is RNA(n) + a ribonucleoside 5'-triphosphate = RNA(n+1) + diphosphate. DNA-dependent RNA polymerase catalyzes the transcription of DNA into RNA using the four ribonucleoside triphosphates as substrates. The sequence is that of DNA-directed RNA polymerase subunit beta' from Pediococcus acidilactici.